The sequence spans 1023 residues: RTX-I toxin determinant A from serotypes 5/10 (1023 aa).

The next 3 helical transmembrane spans lie at 226 to 256 (NNLP…ILSN), 297 to 326 (STTA…ADKF), and 367 to 406 (INSV…SGIL). Hemolysin-type calcium-binding repeat units lie at residues 730–747 (FGSR…DDEI), 748–765 (YGND…NDVI), 766–783 (HGGD…NDRL), 784–801 (IGGK…DDEL), 812–829 (LGGA…TNLF), and 830–847 (DGGV…KDIY).

This sequence belongs to the RTX prokaryotic toxin (TC 1.C.11) family. Post-translationally, palmitoylated by ApxIC. The toxin only becomes active when modified.

It localises to the secreted. It is found in the host cell membrane. One of the virulence factors of A.pleuropneumoniae, which has a strong hemolytic activity and is cytotoxic for alveolar macrophages and neutrophils. This chain is RTX-I toxin determinant A from serotypes 5/10 (apxIA), found in Actinobacillus pleuropneumoniae (Haemophilus pleuropneumoniae).